A 195-amino-acid polypeptide reads, in one-letter code: Protein lin-28 homolog A (195 aa).

Residues 33–106 (QGSGVCKWFN…GLESTRVTGP (74 aa)) form the CSD domain. The tract at residues 98 to 126 (LESTRVTGPGGAPCIGSERRPKVKGQQKR) is disordered. Residues 107–130 (GGAPCIGSERRPKVKGQQKRRQKG) form a flexible linker region. CCHC-type zinc fingers lie at residues 131-148 (DRCY…ECKL) and 153-170 (KKCH…QCPA). 8 residues coordinate Zn(2+): Cys133, Cys136, His141, Cys146, Cys155, Cys158, His163, and Cys168. The interval 175 to 195 (AANLEEQPISEEQELIPETME) is disordered. Residues 182–195 (PISEEQELIPETME) are compositionally biased toward acidic residues.

This sequence belongs to the lin-28 family. Monomer.

It is found in the cytoplasm. The protein localises to the rough endoplasmic reticulum. The protein resides in the P-body. Its subcellular location is the stress granule. It localises to the nucleus. It is found in the nucleolus. Its function is as follows. RNA-binding protein that inhibits processing of pre-let-7 miRNAs and regulates translation of mRNAs that control developmental timing, pluripotency and metabolism. Seems to recognize a common structural G-quartet (G4) feature in its miRNA and mRNA targets. 'Translational enhancer' that drives specific mRNAs to polysomes and increases the efficiency of protein synthesis. Its association with the translational machinery and target mRNAs results in an increased number of initiation events per molecule of mRNA and, indirectly, in mRNA stabilization. Suppressor of microRNA (miRNA) biogenesis, including that of let-7. Binds specific target miRNA precursors (pre-miRNAs), recognizing an 5'-GGAG-3' motif found in their terminal loop, and recruits uridylyltransferase. This results in the terminal uridylation of target pre-miRNAs. Uridylated pre-miRNAs fail to be processed by Dicer and undergo degradation. Localized to the periendoplasmic reticulum area, binds to a large number of spliced mRNAs and inhibits the translation of mRNAs destined for the ER, reducing the synthesis of transmembrane proteins, ER or Golgi lumen proteins, and secretory proteins. Binds to and enhances the translation of mRNAs for several metabolic enzymes, increasing glycolysis and oxidative phosphorylation. Which, with the let-7 repression may enhance tissue repair in adult tissue. This is Protein lin-28 homolog A (lin28a) from Xenopus tropicalis (Western clawed frog).